We begin with the raw amino-acid sequence, 54 residues long: Ovomucoid (54 aa).

Positions V4–C54 constitute a Kazal-like domain. 3 cysteine pairs are disulfide-bonded: C6–C36, C14–C33, and C22–C54. N43 carries an N-linked (GlcNAc...) asparagine glycan.

Its subcellular location is the secreted. This Dendrocygna viduata (White-faced whistling-duck) protein is Ovomucoid.